The primary structure comprises 779 residues: Aconitate hydratase, mitochondrial (779 aa).

The N-terminal 28 residues, 1 to 28 (MIAMDRIARIPIARWTSRAFRVSAAARQ), are a transit peptide targeting the mitochondrion. Substrate contacts are provided by residues glutamine 97 and 190–192 (DSH). [4Fe-4S] cluster-binding residues include cysteine 383, cysteine 446, and cysteine 449. Substrate contacts are provided by residues arginine 472, arginine 477, arginine 605, and 668-669 (SR).

The protein belongs to the aconitase/IPM isomerase family. In terms of assembly, monomer. [4Fe-4S] cluster serves as cofactor.

The protein localises to the mitochondrion. The enzyme catalyses citrate = D-threo-isocitrate. Its pathway is carbohydrate metabolism; tricarboxylic acid cycle; isocitrate from oxaloacetate: step 2/2. Its function is as follows. Catalyzes the isomerization of citrate to isocitrate via cis-aconitate. The chain is Aconitate hydratase, mitochondrial from Gracilaria gracilis (Red alga).